Consider the following 312-residue polypeptide: Malate dehydrogenase (312 aa).

NAD(+)-binding positions include 7 to 13 (GAAGGIG) and Asp34. Residues Arg81 and Arg87 each contribute to the substrate site. Residues Asn94 and 117 to 119 (ITN) each bind NAD(+). Residues Asn119 and Arg153 each contribute to the substrate site. The Proton acceptor role is filled by His177. An NAD(+)-binding site is contributed by Met227.

The protein belongs to the LDH/MDH superfamily. MDH type 1 family. As to quaternary structure, homodimer.

The enzyme catalyses (S)-malate + NAD(+) = oxaloacetate + NADH + H(+). In terms of biological role, catalyzes the reversible oxidation of malate to oxaloacetate. The polypeptide is Malate dehydrogenase (Edwardsiella ictaluri (strain 93-146)).